The sequence spans 147 residues: UPF0306 protein YhbP (147 aa).

It belongs to the UPF0306 family.

The polypeptide is UPF0306 protein YhbP (Salmonella choleraesuis (strain SC-B67)).